The primary structure comprises 273 residues: Ribosomal RNA small subunit methyltransferase A (273 aa).

The S-adenosyl-L-methionine site is built by Asn-18, Leu-20, Gly-45, Glu-66, Asp-91, and Asn-113.

It belongs to the class I-like SAM-binding methyltransferase superfamily. rRNA adenine N(6)-methyltransferase family. RsmA subfamily.

Its subcellular location is the cytoplasm. The catalysed reaction is adenosine(1518)/adenosine(1519) in 16S rRNA + 4 S-adenosyl-L-methionine = N(6)-dimethyladenosine(1518)/N(6)-dimethyladenosine(1519) in 16S rRNA + 4 S-adenosyl-L-homocysteine + 4 H(+). Its function is as follows. Specifically dimethylates two adjacent adenosines (A1518 and A1519) in the loop of a conserved hairpin near the 3'-end of 16S rRNA in the 30S particle. May play a critical role in biogenesis of 30S subunits. This is Ribosomal RNA small subunit methyltransferase A from Salmonella agona (strain SL483).